We begin with the raw amino-acid sequence, 191 residues long: Elongation factor P-like protein (191 aa).

Belongs to the elongation factor P family.

This is Elongation factor P-like protein from Photobacterium profundum (strain SS9).